The sequence spans 99 residues: Carboxysome shell vertex protein CcmL (99 aa).

One can recognise a BMV domain in the interval 1 to 83 (MKIARVCGTV…IDAAVVAIID (83 aa)).

The protein belongs to the CcmL/EutN family. CcmL subfamily. Homopentamer. May interact with CcmK2, this occurs at very high CcmK2 concentrations. Interacts with full-length CcmM.

The protein localises to the carboxysome. In terms of biological role, probably forms vertices in the carboxysome, a polyhedral inclusion where RuBisCO (ribulose bisphosphate carboxylase, rbcL-rbcS) is sequestered. Has been modeled to induce curvature upon insertion into an otherwise flat hexagonal molecular layer of CcmK subunits. This is Carboxysome shell vertex protein CcmL from Thermosynechococcus vestitus (strain NIES-2133 / IAM M-273 / BP-1).